Here is a 320-residue protein sequence, read N- to C-terminus: Biotin synthase (320 aa).

The region spanning 39 to 267 is the Radical SAM core domain; sequence NAIQLATLLS…KARVRLSAGR (229 aa). 3 residues coordinate [4Fe-4S] cluster: cysteine 54, cysteine 58, and cysteine 61. Positions 98, 130, 190, and 262 each coordinate [2Fe-2S] cluster.

This sequence belongs to the radical SAM superfamily. Biotin synthase family. As to quaternary structure, homodimer. [4Fe-4S] cluster serves as cofactor. It depends on [2Fe-2S] cluster as a cofactor.

The catalysed reaction is (4R,5S)-dethiobiotin + (sulfur carrier)-SH + 2 reduced [2Fe-2S]-[ferredoxin] + 2 S-adenosyl-L-methionine = (sulfur carrier)-H + biotin + 2 5'-deoxyadenosine + 2 L-methionine + 2 oxidized [2Fe-2S]-[ferredoxin]. It functions in the pathway cofactor biosynthesis; biotin biosynthesis; biotin from 7,8-diaminononanoate: step 2/2. Functionally, catalyzes the conversion of dethiobiotin (DTB) to biotin by the insertion of a sulfur atom into dethiobiotin via a radical-based mechanism. The protein is Biotin synthase of Synechococcus elongatus (strain ATCC 33912 / PCC 7942 / FACHB-805) (Anacystis nidulans R2).